Consider the following 884-residue polypeptide: MTSASSMSVSVECVNICNLTKGDGNARSDCSALSCAWKAPRALTGFLASTAHPPVCSVYSCGRNGRKSRMKACAWQRYEYEVGFSEAPYFVNVRNILKSRLSCGGHKRWELYCVSAESSSGASSDVTVETLWEDLFPSISYLPRKELEFVQKGLKLAFEAHHGQKRRSGEPFIIHPVAVARILGELELDWESIVAGLLHDTVEDTNFITFEKIEEEFGATVRHIVEGETKVSKLGKLKCKTESETIQDVKADDLRQMFLAMTDEVRVIIVKLADRLHNMRTLCHMPPHKQSSIAGETLQVFAPLAKLLGMYSIKSELENLSFMYVSAEDYDRVTSRIANLYKEHEKELTEANRILVKKIEDDQFLDLVTVNTDVRSVCKETYSIYKAALKSKGSINDYNQIAQQLRIVVKPKPSVGVGPLCSPQQICYHVLGLVHEIWKPIPRTVKDYIATPKPNGYQSLHTTVIPFLYESMFRLEVQIRTEEMDLIAERGIAVYYNGKSLSTGLVGNAVPLGRNSRGKTGCLNNADFALRVGWLNAIREWQEEFVGNMSSREFVDTITRDLLGSRVFVFTPKGEIKNLPKGATVVDYAYLIHTEIGNKMVAAKVNGNLVSPTHVLENAEVVEIVTYNALSSKSAFQRHKQWLQHAKTRSARHKIMRFLREQAAQCAAEITQDQVNDFVADSDSDVEDLTEDSRKSLQWWEKILVNVKQFQSQDKSRDTTPAPQNGSVWAPKVNGKHNKAIKNSSSDEPEFLLPGDGIARILPANIPAYKEVLPGLDSWRDSKIATWHHLEGQSIEWLCVVSMDRKGIIAEVTTVLAAEGIALCSCVAEIDRGRGLAVMLFQIEANIESLVSVCAKVDLVLGVLGWSSGCSWPRSTENAQVLEC.

The N-terminal 55 residues, 1–55 (MTSASSMSVSVECVNICNLTKGDGNARSDCSALSCAWKAPRALTGFLASTAHPPV), are a transit peptide targeting the chloroplast. Positions 172–279 (FIIHPVAVAR…VKLADRLHNM (108 aa)) constitute an HD domain. In terms of domain architecture, TGS spans 563-626 (LGSRVFVFTP…ENAEVVEIVT (64 aa)). Over residues 711–727 (QSQDKSRDTTPAPQNGS) the composition is skewed to polar residues. The disordered stretch occupies residues 711–747 (QSQDKSRDTTPAPQNGSVWAPKVNGKHNKAIKNSSSD). An ACT domain is found at 797-868 (WLCVVSMDRK…LVLGVLGWSS (72 aa)).

It belongs to the RelA/SpoT family. As to quaternary structure, interacts with RPP4. Interacts with RPP5. Expressed in hypocotyls, shoots, cotyledons, rosette leaves, sepals and pistils.

Its subcellular location is the plastid. It is found in the chloroplast. The enzyme catalyses GTP + ATP = guanosine 3'-diphosphate 5'-triphosphate + AMP. In terms of biological role, may be involved in a rapid plant ppGpp (guanosine 3'-diphosphate 5'-diphosphate)-mediated response to pathogens and other stresses. Unable to functionally complement E.coli relA mutants. This is Putative GTP diphosphokinase RSH1, chloroplastic (RSH1) from Arabidopsis thaliana (Mouse-ear cress).